The following is a 142-amino-acid chain: Large ribosomal subunit protein uL22c (142 aa).

The protein belongs to the universal ribosomal protein uL22 family. As to quaternary structure, part of the 50S ribosomal subunit.

The protein resides in the plastid. It localises to the chloroplast. Functionally, this protein binds specifically to 23S rRNA. In terms of biological role, the globular domain of the protein is located near the polypeptide exit tunnel on the outside of the subunit, while an extended beta-hairpin is found that lines the wall of the exit tunnel in the center of the 70S ribosome. The chain is Large ribosomal subunit protein uL22c (rpl22) from Pinus koraiensis (Korean pine).